The following is a 316-amino-acid chain: 4-hydroxy-3-methylbut-2-enyl diphosphate reductase (316 aa).

C12 is a binding site for [4Fe-4S] cluster. (2E)-4-hydroxy-3-methylbut-2-enyl diphosphate-binding residues include H41 and H74. Dimethylallyl diphosphate is bound by residues H41 and H74. 2 residues coordinate isopentenyl diphosphate: H41 and H74. Residue C96 participates in [4Fe-4S] cluster binding. (2E)-4-hydroxy-3-methylbut-2-enyl diphosphate is bound at residue H124. Residue H124 coordinates dimethylallyl diphosphate. H124 contacts isopentenyl diphosphate. The active-site Proton donor is E126. T167 contacts (2E)-4-hydroxy-3-methylbut-2-enyl diphosphate. C197 is a [4Fe-4S] cluster binding site. 4 residues coordinate (2E)-4-hydroxy-3-methylbut-2-enyl diphosphate: S225, S226, N227, and S269. 4 residues coordinate dimethylallyl diphosphate: S225, S226, N227, and S269. Isopentenyl diphosphate-binding residues include S225, S226, N227, and S269.

It belongs to the IspH family. Homodimer. [4Fe-4S] cluster is required as a cofactor.

It catalyses the reaction isopentenyl diphosphate + 2 oxidized [2Fe-2S]-[ferredoxin] + H2O = (2E)-4-hydroxy-3-methylbut-2-enyl diphosphate + 2 reduced [2Fe-2S]-[ferredoxin] + 2 H(+). The catalysed reaction is dimethylallyl diphosphate + 2 oxidized [2Fe-2S]-[ferredoxin] + H2O = (2E)-4-hydroxy-3-methylbut-2-enyl diphosphate + 2 reduced [2Fe-2S]-[ferredoxin] + 2 H(+). Its pathway is isoprenoid biosynthesis; dimethylallyl diphosphate biosynthesis; dimethylallyl diphosphate from (2E)-4-hydroxy-3-methylbutenyl diphosphate: step 1/1. It functions in the pathway isoprenoid biosynthesis; isopentenyl diphosphate biosynthesis via DXP pathway; isopentenyl diphosphate from 1-deoxy-D-xylulose 5-phosphate: step 6/6. In terms of biological role, catalyzes the conversion of 1-hydroxy-2-methyl-2-(E)-butenyl 4-diphosphate (HMBPP) into a mixture of isopentenyl diphosphate (IPP) and dimethylallyl diphosphate (DMAPP). Acts in the terminal step of the DOXP/MEP pathway for isoprenoid precursor biosynthesis. This is 4-hydroxy-3-methylbut-2-enyl diphosphate reductase from Enterobacter sp. (strain 638).